The following is a 210-amino-acid chain: Large ribosomal subunit protein uL3 (210 aa).

The interval 120-143 is disordered; it reads FQGNIKKDGQSRGPMGHGSRYHRR.

Belongs to the universal ribosomal protein uL3 family. Part of the 50S ribosomal subunit. Forms a cluster with proteins L14 and L19.

Its function is as follows. One of the primary rRNA binding proteins, it binds directly near the 3'-end of the 23S rRNA, where it nucleates assembly of the 50S subunit. The sequence is that of Large ribosomal subunit protein uL3 from Latilactobacillus sakei subsp. sakei (strain 23K) (Lactobacillus sakei subsp. sakei).